The chain runs to 275 residues: 2,3,4,5-tetrahydropyridine-2,6-dicarboxylate N-succinyltransferase (275 aa).

The substrate site is built by Arg104 and Asp141.

Belongs to the transferase hexapeptide repeat family. Homotrimer.

The protein resides in the cytoplasm. The enzyme catalyses (S)-2,3,4,5-tetrahydrodipicolinate + succinyl-CoA + H2O = (S)-2-succinylamino-6-oxoheptanedioate + CoA. The protein operates within amino-acid biosynthesis; L-lysine biosynthesis via DAP pathway; LL-2,6-diaminopimelate from (S)-tetrahydrodipicolinate (succinylase route): step 1/3. The sequence is that of 2,3,4,5-tetrahydropyridine-2,6-dicarboxylate N-succinyltransferase from Haemophilus influenzae (strain 86-028NP).